A 963-amino-acid chain; its full sequence is MERREEQPGAAGAGAAPALDFTVESVEKALHQLYYDPNIENKNLAQKWLMQAQVSPQAWHFSWQLLQPDKVPEIQYFGASALPIKTSRYWSDIPTDQYESLKAQLFTQITRFASGSKIVLTRLCVALASLALSMMPDAWPCAVADMVRLFQAEDSPVDGQGRCLALLELLTVLPEEFQTSRLPQYRKGLVRTSLAVECGAVFPLLEQLLQQPSSPSCVRQKVLKCFSSWVQLEVPLQDCEALIQAAFAALQDSELFDSSVEAIVNAISQPDAQRCVNTLLKLIPLVLGLQEQLRQAVQNGDMETSHGICRIAVALGENHSRALLDQVEHWQSFLALVNMIMFCTGIPGHYPVNETTSSLTLTFWYTLQDDILSFEAEKQAVYQQVYRPVYFQLVDVLLHKAQFPSDEEYGFWSSDEKEQFRIYRVDISDTLMYVYEMLGAELLSNLYDKLGRLLTSSEEPYSWQHTEALLYGFQSIAETIDVNYSDVVPGLIGLIPRISISNVQLADTVMFTIGALSEWLADHPVMINSVLPLVLHALGNPEPSVSSVSTLKKICRECKYDLPPYAANIVAVSQDVLMKQIHKTSQCMWLMQALGFLLSALQVEEILKNLHSLISPYIQQLEKLAEEIPNPSNKLAIVHILGLLSNLFTTLDISHHEDDHEGPELRKLPVPQGPNPVVVVLQQVFQLIQKVLSKWLNDAQVVEAVCAIFEKSVKTLLDDFAPMVPQLCEMLGRMYSTIPQASALDLTRQLVHIFAHEPAHFPPIEALFLLVTSVTLTLFQQGPRDHPDIVDSFMQLLAQALKRKPDLFLCERLDVKAVFQCAVLALKFPEAPTVKASCGFFTELLPRCGEVESVGKVVQEDGRMLLIAVLEAIGGQASRSLMDCFADILFALNKHCFSLLSMWIKEALQPPGFPSARLSPEQKDTFSQQILRERVNKRRVKEMVKEFTLLCRGLHGTDYTADY.

HEAT repeat units lie at residues 24-54 (ESVE…QAQV), 56-88 (PQAW…KTSR), 95-135 (TDQY…LSMM), 142-179 (AVAD…EFQT), 194-231 (LAVE…SWVQ), 236-268 (LQDC…NAIS), 276-325 (VNTL…ALLD), 330-372 (WQSF…DDIL), 375-438 (EAEK…YEML), 440-476 (AELL…FQSI), 487-522 (VVPG…WLAD), 524-558 (PVMI…CREC), 562-600 (LPPY…LLSA), 603-648 (VEEI…SNLF), 676-716 (PVVV…VKTL), 720-754 (FAPM…VHIF), 761-803 (FPPI…ALKR), 815-845 (VKAV…TELL), 860-893 (EDGR…FALN), and 897-931 (FSLL…QQIL). The 67-residue stretch at 45–111 (AQKWLMQAQV…KAQLFTQITR (67 aa)) folds into the Importin N-terminal domain.

The protein belongs to the importin beta family. As to quaternary structure, interacts with UBC9, RAN, RBM8A, eIF-1A and PAX6.

It localises to the cytoplasm. Its subcellular location is the nucleus. Functionally, functions in nuclear protein import as nuclear transport receptor. Serves as receptor for nuclear localization signals (NLS) in cargo substrates. Is thought to mediate docking of the importin/substrate complex to the nuclear pore complex (NPC) through binding to nucleoporin and the complex is subsequently translocated through the pore by an energy requiring, Ran-dependent mechanism. At the nucleoplasmic side of the NPC, Ran binds to the importin, the importin/substrate complex dissociates and importin is re-exported from the nucleus to the cytoplasm where GTP hydrolysis releases Ran. The directionality of nuclear import is thought to be conferred by an asymmetric distribution of the GTP- and GDP-bound forms of Ran between the cytoplasm and nucleus. Mediates the nuclear import of UBC9, the RBM8A/MAGOH complex, PAX6 and probably other members of the paired homeobox family. Also mediates nuclear export of eIF-1A, and the cytoplasmic release of eIF-1A is triggered by the loading of import substrates onto IPO13. In Pongo abelii (Sumatran orangutan), this protein is Importin-13 (IPO13).